Consider the following 3567-residue polypeptide: MWSRLAFCCWALALVSGWTNFQPVAPSLNFSFRLFPEASPGALGRLAVPPASSEEEAAGSKVERLGRAFRSRVRRLRELSGSLELVFLVDESSSVGQTNFLNELKFVRKLLSDFPVVSTATRVAIVTFSSKNNVVARVDYISTSRAHQHKCALLSREIPAITYRGGGTYTKGAFQQAAQILRHSRENSTKVIFLITDGYSNGGDPRPIAASLRDFGVEIFTFGIWQGNIRELNDMASTPKEEHCYLLHSFEEFEALARRALHEDLPSGSFIQEDMARCSYLCEAGKDCCDRMASCKCGTHTGQFECICEKGYYGKGLQHECTACPSGTYKPEASPGGISTCIPCPDVSHTSPPGSTSPEDCVCREGYQRSGQTCEVVHCPALKPPENGFFIQNTCKNHFNAACGVRCRPGFDLVGSSIHLCQPNGLWSGTESFCRVRTCPHLRQPKHGHISCSTAEMSYNTLCLVTCNEGYRLEGSTRLTCQGNAQWDGPEPRCVERHCATFQKPKGVIISPPSCGKQPARPGMTCQLSCRQGYILSGVREVRCATSGKWSAKVQTAVCKDVEAPQISCPNDIEAKTGEQQDSANVTWQVPTAKDNSGEKVSVHVHPAFTPPYLFPIGDVAITYTATDSSGNQASCTFYIKVIDVEPPVIDWCRSPPPIQVVEKEHPASWDEPQFSDNSGAELVITSSHTQGDMFPHGETVVWYTATDPSGNNRTCDIHIVIKGSPCEVPFTPVNGDFICAQDSAGVNCSLSCKEGYDFTEGSTEKYYCAFEDGIWRPPYSTEWPDCAIKRFANHGFKSFEMLYKTTRCDDMDLFKKFSAAFETTLGNMVPSFCNDADDIDCRLEDLTKKYCIEYNYNYENGFAIGPGGWGAGNRLDYSYDHFLDVVQETPTDVGKARSSRIKRTVPLSDPKIQLIFNITASVPLPEERNDTLELENQQRLIKTLETITNRLKSTLNKEPMYSFQLASETVVADSNSLETEKAFLFCRPGSVLRGRMCVNCPLGTSYSLEHSTCESCLMGSYQDEEGQLECKLCPPRTHTEYLHSRSVSECKAQCKQGTYSSSGLETCESCPLGTYQPEFGSRSCLLCPETTTTVKRGAVDISACGVPCPVGEFSRSGLTPCYPCPRDYYQPNAGKSFCLACPFYGTTTITGATSITDCSSFSSTFSAAEESIVPLVAPGHSQNKYEVSSQVFHECFLNPCHNSGTCQQLGRGYVCLCPPGYTGLKCETDIDECSSLPCLNGGICRDQVGGFTCECSLGYSGQICEENINECISSPCLNKGTCTDGLASYRCTCVKGYMGVHCETDVNECQSSPCLNNAVCKDQVGGFSCKCPPGFLGTRCEKNVDECLSQPCQNGATCKDGANSFRCQCPAGFTGTHCELNINECQSNPCRNQATCVDELNSYSCKCQPGFSGHRCETEQPSGFNLDFEVSGIYGYVLLDGVLPTLHAITCAFWMKSSDVINYGTPISYALEDDKDNTFLLTDYNGWVLYVNGKEKITNCPSVNDGIWHHIAITWTSTGGAWRVYIDGELSDGGTGLSIGKAIPGGGALVLGQEQDKKGEGFNPAESFVGSISQLNLWDYVLSPQQVKLLASSCPEELSRGNVLAWPDFLSGITGKVKVDSSSMFCSDCPSLEGSVPHLRPASGNRKPGSKVSLFCDPGFQMVGNPVQYCLNQGQWTQPLPHCERIRCGLPPALENGFYSAEDFHAGSTVTYQCTSGYYLLGDSRMFCTDNGSWNGISPSCLDVDECAVGSDCSEHASCLNTNGSYVCSCNPPYTGDGKNCAEPVKCKAPENPENGHSSGEIYTVGTAVTFSCDEGHELVGVSTITCLETGEWDRLRPSCEAISCGVPPVPENGGVDGSAFTYGSKVVYRCDKGYTLSGDEESACLASGSWSHSSPVCELVKCSQPEDINNGKYILSGLTYLSIASYSCENGYSLQGPSLLECTASGSWDRAPPSCQLVSCGEPPIVKDAVITGSNFTFGNTVAYTCKEGYTLAGPDTIVCQANGKWNSSNHQCLAVSCDEPPNVDHASPETAHRLFGDTAFYYCADGYSLADNSQLICNAQGNWVPPAGQAVPRCIAHFCEKPPSVSYSILESVSKAKFAAGSVVSFKCMEGFVLNTSAKIECLRGGEWSPSPLSVQCIPVRCGEPPSIANGYPSGTNYSFGAVVAYSCHKGFYIKGEKKSTCEATGQWSKPTPTCHPVSCNEPPKVENGFLEHTTGRTFESEARFQCNPGYKAAGSPVFVCQANRHWHSDAPLSCTPLNCGKPPPIQNGFLKGESFEVGSKVQFVCNEGYELVGDNSWTCQKSGKWSKKPSPKCVPTKCAEPPLLENQLVLKELASEVGVMTISCKEGHALQGPSVLKCLPSGQWNGSFPICKMVLCPSPPLIPFGVPASSGALHFGSTVKYLCVDGFFLRGSPTILCQADSTWSSPLPECVPVECPQPEEILNGIIHVQGLAYLSTTLYTCKPGFELVGNATTLCGENGQWLGGKPMCKPIECPEPKEILNGQFSSVSFQYGQTITYFCDRGFRLEGPKSLTCLETGDWDMDPPSCDAIHCSDPQPIENGFVEGADYRYGAMIIYSCFPGFQVLGHAMQTCEESGWSSSSPTCVPIDCGLPPHIDFGDCTKVRDGQGHFDQEDDMMEVPYLAHPQHLEATAKALENTKESPASHASHFLYGTMVSYSCEPGYELLGIPVLICQEDGTWNGTAPSCISIECDLPVAPENGFLHFTQTTMGSAAQYSCKPGHILEGSHLRLCLQNKQWSGTVPRCEAISCSKPNPLWNGSIKGDDYSYLGVLYYECDSGYILNGSKKRTCQENRDWDGHEPMCIPVDCGSPPVPTNGRVKGEEYTFQKEITYSCREGFILEGARSRICLTNGSWSGATPSCMPVRCPAPPQVPNGVADGLDYGFKKEVAFHCLEGYVLQGAPRLTCQSNGTWDAEVPVCKPATCGPPADLPQGFPNGFSFYHGGHIQYQCFTGYKLHGNPSRRCLPNGSWSGSSPSCLPCRCSTPIIQQGTINATDLGCGKTVQIECFKGFKLLGLSEITCDANGQWSDVPLCEHAQCGPLPTIPNAIVLEGSLSEDNVVTYSCRPGYTMQGSSDLICTEKAIWSQPYPTCEPLSCGPPPTVANAVATGEAHTYESKVKLRCLEGYVMDSDTDTFTCQQDGHWVPERITCSPKKCPVPSNMTRIRFHGDDFQVNRQVSVSCAEGFTHEGVNWSTCQPDGTWEPPFSDESCIPVVCGHPESPAHGSVVGNKHSFGSTIVYQCDPGYKLEGNRERICQENRQWSGEVAVCRENRCETPAEFPNGKAVLENTTSGPSLLFSCHRGYTLEGSPEAHCTANGTWNHLTPLCKPNPCPVPFVIPENAVLSEKEFYVDQNVSIKCREGFLLKGNGVITCSPDETWTHTNARCEKISCGPPSHVENAIARGVYYQYGDMITYSCYSGYMLEGSLRSVCLENGTWTPSPVCRAVCRFPCQNGGVCQRPNACSCPDGWMGRLCEEPICILPCLNGGRCVAPYQCDCPTGWTGSRCHTATCQSPCLNGGKCIRPNRCHCLSAWTGHDCSRKRRAGL.

A signal peptide spans 1 to 17 (MWSRLAFCCWALALVSG). Residues 84–265 (ELVFLVDESS…LARRALHEDL (182 aa)) form the VWFA domain. Asparagine 187 carries an N-linked (GlcNAc...) asparagine glycan. Sushi domains are found at residues 377–436 (VHCP…FCRV), 437–496 (RTCP…RCVE), and 497–561 (RHCA…VCKD). 6 disulfide bridges follow: cysteine 379-cysteine 421, cysteine 407-cysteine 434, cysteine 439-cysteine 481, cysteine 467-cysteine 494, cysteine 499-cysteine 544, and cysteine 530-cysteine 559. HYR domains lie at 560–644 (KDVE…KVID) and 645–724 (VEPP…VIKG). The 65-residue stretch at 725–789 (SPCEVPFTPV…YSTEWPDCAI (65 aa)) folds into the Sushi 4 domain. Intrachain disulfides connect cysteine 727–cysteine 769, cysteine 753–cysteine 787, cysteine 1196–cysteine 1207, cysteine 1201–cysteine 1216, cysteine 1218–cysteine 1227, cysteine 1234–cysteine 1245, cysteine 1239–cysteine 1254, cysteine 1256–cysteine 1265, cysteine 1272–cysteine 1283, cysteine 1277–cysteine 1292, cysteine 1294–cysteine 1303, cysteine 1310–cysteine 1321, cysteine 1315–cysteine 1330, cysteine 1332–cysteine 1341, cysteine 1348–cysteine 1359, cysteine 1353–cysteine 1368, cysteine 1370–cysteine 1379, cysteine 1386–cysteine 1397, cysteine 1391–cysteine 1406, and cysteine 1408–cysteine 1417. Residues 1192–1228 (VFHECFLNPCHNSGTCQQLGRGYVCLCPPGYTGLKCE) enclose the EGF-like 1 domain. One can recognise an EGF-like 2; calcium-binding domain in the interval 1230 to 1266 (DIDECSSLPCLNGGICRDQVGGFTCECSLGYSGQICE). Residues 1268–1304 (NINECISSPCLNKGTCTDGLASYRCTCVKGYMGVHCE) form the EGF-like 3; calcium-binding domain. One can recognise an EGF-like 4; calcium-binding domain in the interval 1306–1342 (DVNECQSSPCLNNAVCKDQVGGFSCKCPPGFLGTRCE). In terms of domain architecture, EGF-like 5; calcium-binding spans 1344–1380 (NVDECLSQPCQNGATCKDGANSFRCQCPAGFTGTHCE). The 37-residue stretch at 1382–1418 (NINECQSNPCRNQATCVDELNSYSCKCQPGFSGHRCE) folds into the EGF-like 6; calcium-binding domain. One can recognise a Pentraxin (PTX) domain in the interval 1423–1627 (SGFNLDFEVS…VKVDSSSMFC (205 aa)). Sushi domains lie at 1628–1686 (SDCP…HCER) and 1687–1744 (IRCG…SCLD). 35 disulfide bridges follow: cysteine 1630-cysteine 1671, cysteine 1657-cysteine 1684, cysteine 1689-cysteine 1729, cysteine 1715-cysteine 1742, cysteine 1748-cysteine 1760, cysteine 1754-cysteine 1769, cysteine 1771-cysteine 1782, cysteine 1788-cysteine 1828, cysteine 1814-cysteine 1841, cysteine 1846-cysteine 1886, cysteine 1872-cysteine 1899, cysteine 1904-cysteine 1944, cysteine 1930-cysteine 1957, cysteine 1962-cysteine 2002, cysteine 1988-cysteine 2015, cysteine 2020-cysteine 2060, cysteine 2046-cysteine 2077, cysteine 2082-cysteine 2125, cysteine 2111-cysteine 2140, cysteine 2145-cysteine 2185, cysteine 2171-cysteine 2198, cysteine 2203-cysteine 2244, cysteine 2230-cysteine 2258, cysteine 2263-cysteine 2303, cysteine 2289-cysteine 2317, cysteine 2322-cysteine 2362, cysteine 2348-cysteine 2375, cysteine 2380-cysteine 2421, cysteine 2407-cysteine 2434, cysteine 2439-cysteine 2479, cysteine 2465-cysteine 2492, cysteine 2497-cysteine 2537, cysteine 2523-cysteine 2550, cysteine 2555-cysteine 2595, and cysteine 2581-cysteine 2607. One can recognise an EGF-like 7; calcium-binding domain in the interval 1744–1783 (DVDECAVGSDCSEHASCLNTNGSYVCSCNPPYTGDGKNCA). 14 consecutive Sushi domains span residues 1780 to 1843 (KNCA…SCEA), 1844 to 1901 (ISCG…VCEL), 1902 to 1959 (VKCS…SCQL), 1960 to 2017 (VSCG…QCLA), 2018 to 2079 (VSCD…RCIA), 2080 to 2142 (HFCE…QCIP), 2143 to 2200 (VRCG…TCHP), 2201 to 2260 (VSCN…SCTP), 2261 to 2319 (LNCG…KCVP), 2320 to 2377 (TKCA…ICKM), 2378 to 2436 (VLCP…ECVP), 2437 to 2494 (VECP…MCKP), 2495 to 2552 (IECP…SCDA), and 2553 to 2609 (IHCS…TCVP). An important for the interaction with integrin ITGA9:ITGB1 region spans residues 2638–2645 (DMMEVPYL). 14 Sushi domains span residues 2660 to 2711 (NTKE…SCIS), 2712 to 2769 (IECD…RCEA), 2770 to 2827 (ISCS…MCIP), 2828 to 2885 (VDCG…SCMP), 2886 to 2943 (VRCP…VCKP), 2944 to 3001 (ATCG…SCLP), 3002 to 3057 (CRCS…LCEH), 3058 to 3115 (AQCG…TCEP), 3116 to 3174 (LSCG…TCSP), 3175 to 3234 (KKCP…SCIP), 3235 to 3292 (VVCG…VCRE), 3293 to 3350 (NRCE…LCKP), 3351 to 3409 (NPCP…RCEK), and 3410 to 3466 (ISCG…VCRA). Intrachain disulfides connect cysteine 2682/cysteine 2709, cysteine 2714/cysteine 2754, cysteine 2740/cysteine 2767, cysteine 2772/cysteine 2812, cysteine 2798/cysteine 2825, cysteine 2830/cysteine 2870, cysteine 2856/cysteine 2883, cysteine 2888/cysteine 2928, cysteine 2914/cysteine 2941, cysteine 2946/cysteine 2986, cysteine 2972/cysteine 2999, cysteine 3004/cysteine 3043, cysteine 3029/cysteine 3055, cysteine 3060/cysteine 3100, cysteine 3086/cysteine 3113, cysteine 3118/cysteine 3159, cysteine 3144/cysteine 3172, cysteine 3177/cysteine 3217, cysteine 3203/cysteine 3232, cysteine 3237/cysteine 3277, cysteine 3263/cysteine 3290, cysteine 3295/cysteine 3335, cysteine 3321/cysteine 3348, cysteine 3353/cysteine 3394, cysteine 3380/cysteine 3407, cysteine 3412/cysteine 3452, cysteine 3438/cysteine 3464, cysteine 3500/cysteine 3510, cysteine 3504/cysteine 3516, cysteine 3518/cysteine 3527, cysteine 3532/cysteine 3542, cysteine 3536/cysteine 3548, and cysteine 3550/cysteine 3559. EGF-like domains lie at 3496–3528 (EEPI…SRCH) and 3529–3560 (TATC…HDCS).

Interacts (via Sushi domain 21) with ITGA9:ITGB1; thereby inhibits Ca(2+) intracellular signaling and as a result represses vasocontraction. Interacts (via Sushi domain 21) with ITGA4:ITGB1; thereby inhibits Ca(2+) intracellular signaling and as a result represses vasocontraction. Interacts with ANGPT1 and ANGPT2. Interacts with PEAR1 (via extracellular domain). Interacts with HSPG2, TLN1, FN1, COPA, CCT2, IQGAP1, LAMC1 and NID1. Interacts (via C-terminus) with TIE1. Expressed in the media layer of the arterial wall (at protein level). Highly expressed in lung and placenta, weakly expressed in the kidney, heart, brain and spleen. Also expressed in bone and periosteum, but not in cartilage and skeletal muscle.

The protein resides in the secreted. It is found in the nucleus. Its subcellular location is the cytoplasm. The protein localises to the membrane. Required for morphological development, cell alignment and migration of lymphatic endothelial cells during embryonic development, potentially via modulation of ANGPT2-TIE1 signaling and subsequent activation of FOXC2 transcription. Required for embryonic lymphatic vascular development, via mediating the correct formation of the first lymphovenous contact site and tight association of the lymphatic endothelium with the venous endothelium. Represses PRKCA-mediated L-type voltage-gated channel Ca(2+) influx and ROCK-mediated calcium sensitivity in vascular smooth muscle cells, via its interaction with integrins, thereby inhibiting vasocontraction. Promotes platelet activation, via its interaction with PEAR1 and subsequent activation of AKT/mTOR signaling. Plays a role in epidermal development and keratinocyte differentiation, independent of cell-cell adhesion. May play a role in initial cell attachment of stromal osteogenic cells. May promote myoblast cell adhesion when in the presence of integrin ITGA9:ITGB1. This chain is Sushi, von Willebrand factor type A, EGF and pentraxin domain-containing protein 1 (Svep1), found in Mus musculus (Mouse).